A 171-amino-acid polypeptide reads, in one-letter code: Orange carotenoid-binding domain-containing protein (171 aa).

The 151-residue stretch at 21–171 (GDAVASTITV…ADMGVDPLAD (151 aa)) folds into the OCP N-terminal domain.

It belongs to the orange carotenoid-binding protein family. 3'-hydroxyechinenone serves as cofactor.

It localises to the cellular thylakoid membrane. In terms of biological role, might act as a photo-protectant, protecting against damage induced by excess light via a process known as non-photochemical quenching (NPQ). In Nostoc sp. (strain PCC 7120 / SAG 25.82 / UTEX 2576), this protein is Orange carotenoid-binding domain-containing protein.